The chain runs to 151 residues: Ribosome maturation factor RimP (151 aa).

It belongs to the RimP family.

It is found in the cytoplasm. Functionally, required for maturation of 30S ribosomal subunits. The protein is Ribosome maturation factor RimP of Alcanivorax borkumensis (strain ATCC 700651 / DSM 11573 / NCIMB 13689 / SK2).